A 429-amino-acid chain; its full sequence is Protein ORF66 (429 aa).

This sequence belongs to the herpesviridae UL49 family. Interacts with ORF34.

The protein resides in the host nucleus. It is found in the host cytoplasm. Functionally, participates in the expression of late viral mRNAs. This chain is Protein ORF66 (ORF66), found in Homo sapiens (Human).